Here is a 323-residue protein sequence, read N- to C-terminus: Methionyl-tRNA formyltransferase (323 aa).

115-118 (SLLP) lines the (6S)-5,6,7,8-tetrahydrofolate pocket.

It belongs to the Fmt family.

It catalyses the reaction L-methionyl-tRNA(fMet) + (6R)-10-formyltetrahydrofolate = N-formyl-L-methionyl-tRNA(fMet) + (6S)-5,6,7,8-tetrahydrofolate + H(+). In terms of biological role, attaches a formyl group to the free amino group of methionyl-tRNA(fMet). The formyl group appears to play a dual role in the initiator identity of N-formylmethionyl-tRNA by promoting its recognition by IF2 and preventing the misappropriation of this tRNA by the elongation apparatus. The polypeptide is Methionyl-tRNA formyltransferase (Blochmanniella floridana).